The chain runs to 503 residues: Transmembrane prolyl 4-hydroxylase (503 aa).

The disordered stretch occupies residues Met1–Pro49. The Cytoplasmic segment spans residues Met1 to Tyr61. Residues Phe62 to Phe82 traverse the membrane as a helical; Signal-anchor for type II membrane protein segment. Residues Val83–Leu503 lie on the Lumenal side of the membrane. The disordered stretch occupies residues Glu90–Gly110. EF-hand domains are found at residues Ala186–Arg221 and Pro225–Lys260. 9 residues coordinate Ca(2+): Asp199, Asn201, Asp203, Arg205, Glu210, Asp238, Asp240, Asp242, and Glu249. In terms of domain architecture, Fe2OG dioxygenase spans Glu310–Val461. Fe cation-binding residues include His329 and Asp331. N-linked (GlcNAc...) asparagine glycans are attached at residues Asn349 and Asn369. Glu375 serves as a coordination point for Fe cation. Asn383 carries an N-linked (GlcNAc...) asparagine glycan. Residue Lys452 participates in 2-oxoglutarate binding.

Homodimer. The cofactor is Fe(2+). L-ascorbate serves as cofactor. Post-translationally, glycosylated. Highest expression levels are detected in the eye and brain, especially in the retinal epithelium cells and cortical neurons. Also expressed in skeletal muscle, lung, heart, adrenal gland, kidney, prostate, thyroid and testis.

The protein localises to the endoplasmic reticulum membrane. The catalysed reaction is L-prolyl-[hypoxia-inducible factor alpha subunit] + 2-oxoglutarate + O2 = trans-4-hydroxy-L-prolyl-[hypoxia-inducible factor alpha subunit] + succinate + CO2. Functionally, catalyzes the post-translational formation of 4-hydroxyproline in hypoxia-inducible factor (HIF) alpha proteins. Hydroxylates HIF1A at 'Pro-402' and 'Pro-564'. May function as a cellular oxygen sensor and, under normoxic conditions, may target HIF through the hydroxylation for proteasomal degradation via the von Hippel-Lindau ubiquitination complex. The sequence is that of Transmembrane prolyl 4-hydroxylase (P4htm) from Mus musculus (Mouse).